A 702-amino-acid chain; its full sequence is Elongation factor G (702 aa).

Residues 8 to 290 (ERYRNIGISA…AVIDYLPSPV (283 aa)) enclose the tr-type G domain. Residues 17-24 (AHIDAGKT), 88-92 (DTPGH), and 142-145 (NKMD) contribute to the GTP site.

Belongs to the TRAFAC class translation factor GTPase superfamily. Classic translation factor GTPase family. EF-G/EF-2 subfamily.

It is found in the cytoplasm. Functionally, catalyzes the GTP-dependent ribosomal translocation step during translation elongation. During this step, the ribosome changes from the pre-translocational (PRE) to the post-translocational (POST) state as the newly formed A-site-bound peptidyl-tRNA and P-site-bound deacylated tRNA move to the P and E sites, respectively. Catalyzes the coordinated movement of the two tRNA molecules, the mRNA and conformational changes in the ribosome. The protein is Elongation factor G of Acidovorax sp. (strain JS42).